Consider the following 794-residue polypeptide: Ribonucleoside-diphosphate reductase large subunit (794 aa).

The region spanning 1 to 92 is the ATP-cone domain; that stretch reads MHVIKRDGGQ…VSNLHKETKK (92 aa). Residues 5–6, 11–17, Thr-53, and Asp-57 contribute to the ATP site; these read KR and EGVMFDK. Positions 202 and 217 each coordinate GDP. A disulfide bond links Cys-218 and Cys-444. DTTP is bound by residues 226-228, Lys-243, Arg-256, and 263-264; these read DSI and AG. Asn-427 contributes to the GDP binding site. Catalysis depends on Asn-427, which acts as the Proton acceptor. Residue Cys-429 is the Cysteine radical intermediate of the active site. GDP-binding positions include Glu-431 and 604 to 607; that span reads TAST. The Proton acceptor role is filled by Glu-431.

This sequence belongs to the ribonucleoside diphosphate reductase large chain family. As to quaternary structure, heterodimer of a large and a small subunit.

The protein localises to the cytoplasm. The catalysed reaction is a 2'-deoxyribonucleoside 5'-diphosphate + [thioredoxin]-disulfide + H2O = a ribonucleoside 5'-diphosphate + [thioredoxin]-dithiol. Its activity is regulated as follows. Under complex allosteric control mediated by deoxynucleoside triphosphates and ATP binding to separate specificity and activation sites on the M1 subunit. The type of nucleotide bound at the specificity site determines substrate preference. It seems probable that ATP makes the enzyme reduce CDP and UDP, dGTP favors ADP reduction and dTTP favors GDP reduction. Stimulated by ATP and inhibited by dATP binding to the activity site. In terms of biological role, provides the precursors necessary for DNA synthesis. Catalyzes the biosynthesis of deoxyribonucleotides from the corresponding ribonucleotides. The chain is Ribonucleoside-diphosphate reductase large subunit (rrm1) from Danio rerio (Zebrafish).